We begin with the raw amino-acid sequence, 1191 residues long: Phosphatidylinositol 3,4,5-trisphosphate 5-phosphatase 1 (1191 aa).

The region spanning 8-104 (WNHGNITRSK…GLVTHLQYPV (97 aa)) is the SH2 domain. Positions 122–148 (SVMSPPELPPRNIPMSAGPSEAKDLPL) are disordered. The short motif at 127–132 (PELPPR) is the SH3-binding 1 element. At S246 the chain carries Phosphoserine. Positions 915-918 (NPNY) match the NPXY motif 1 motif. A Phosphotyrosine modification is found at Y918. S935 carries the phosphoserine modification. Residue Y945 is modified to Phosphotyrosine. Disordered stretches follow at residues 947-994 (QLPK…EARP) and 1021-1191 (YGSV…TAMQ). Pro residues predominate over residues 962 to 972 (PPTPPSQPPLS). T964 carries the phosphothreonine modification. Phosphoserine occurs at positions 967 and 972. Residues 970–975 (PLSPKK) carry the SH3-binding 2 motif. The interaction with DAB2 stretch occupies residues 1015–1029 (MFENPLYGSVSSFPK). The NPXY motif 2 signature appears at 1018-1021 (NPLY). At Y1021 the chain carries Phosphotyrosine. The span at 1032-1046 (PRKEQESPKMLRKEP) shows a compositional bias: basic and acidic residues. Residues 1039–1050 (PKMLRKEPPPCP) carry the SH3-binding 3 motif. Positions 1141–1150 (IPAPRPPLPV) are enriched in pro residues. The segment covering 1162–1184 (KGRDYRDNTELPHHGKHRQEEGL) has biased composition (basic and acidic residues).

It belongs to the inositol 1,4,5-trisphosphate 5-phosphatase family. Interacts with tyrosine phosphorylated form of SHC1. Interacts with tyrosine phosphorylated form of DOK1. Interacts with tyrosine phosphorylated form of DOK3. Interacts with tyrosine phosphorylated form of SLAMF1/CD150. Interacts with PTPN11/SHP-2 in response to IL-3. Interacts with receptor EPOR. Interacts with receptors MS4A2/FCER1B and FCER1G. Interacts with receptors FCGR2B and FCGR3. Interacts with receptor FCGR2A, leading to regulate gene expression during the phagocytic process. Interacts with GRB2. Interacts with PLCG1. Interacts with tyrosine kinases SRC and TEC. Interacts with CRKL. Interacts with c-Met/MET. Interacts with MILR1 (tyrosine-phosphorylated). Isoform 5 interacts with IL6ST/gp130. Can weakly interact (via NPXY motif 2) with DAB2 (via PID domain); the interaction is impaired by tyrosine phosphorylation of the NPXY motif. Interacts (via SH2 domain) with tyrosine phosphorylated KLRC1 (via ITIM). Interacts with MPL/TPOR. Tyrosine phosphorylated by the members of the SRC family after exposure to a diverse array of extracellular stimuli such as cytokines, growth factors, antibodies, chemokines, integrin ligands and hypertonic and oxidative stress. Phosphorylated upon IgG receptor FCGR2B-binding. Specifically expressed in immune and hematopoietic cells. Levels vary considerably within this compartment. Lost during erythropoiesis when erythroid cells become Ter119+. Increases substantially with T-cell maturation and when resting B-cells are activated. Also present in mature granulocytes, monocyte/macrophages, mast cells and platelets. Isoform 5 is the only form expressed in embryonic stem (ES) cells and is coexpressed with other isoforms in hematopoietic stem cells, and disappears with differentiation.

It localises to the cytoplasm. It is found in the cell membrane. The protein localises to the membrane raft. Its subcellular location is the cytoskeleton. It catalyses the reaction a 1,2-diacyl-sn-glycero-3-phospho-(1D-myo-inositol-3,4,5-trisphosphate) + H2O = a 1,2-diacyl-sn-glycero-3-phospho-(1D-myo-inositol-3,4-bisphosphate) + phosphate. It carries out the reaction a 1,2-diacyl-sn-glycero-3-phospho-(1D-myo-inositol-4,5-bisphosphate) + H2O = a 1,2-diacyl-sn-glycero-3-phospho-(1D-myo-inositol 4-phosphate) + phosphate. The enzyme catalyses 1D-myo-inositol 1,3,4,5-tetrakisphosphate + H2O = 1D-myo-inositol 1,3,4-trisphosphate + phosphate. Its activity is regulated as follows. Activated upon translocation to the sites of synthesis of PtdIns(3,4,5)P3 in the membrane. Its function is as follows. Phosphatidylinositol (PtdIns) phosphatase that specifically hydrolyzes the 5-phosphate of phosphatidylinositol-3,4,5-trisphosphate (PtdIns(3,4,5)P3) to produce PtdIns(3,4)P2, thereby negatively regulating the PI3K (phosphoinositide 3-kinase) pathways. Also able to hydrolyze the 5-phosphate of phosphatidylinositol-4,5-bisphosphate (PtdIns(4,5)P3) and inositol 1,3,4,5-tetrakisphosphate. Acts as a negative regulator of B-cell antigen receptor signaling. Mediates signaling from the FC-gamma-RIIB receptor (FCGR2B), playing a central role in terminating signal transduction from activating immune/hematopoietic cell receptor systems. Acts as a negative regulator of myeloid cell proliferation/survival and chemotaxis, mast cell degranulation, immune cells homeostasis, integrin alpha-IIb/beta-3 signaling in platelets and JNK signaling in B-cells. Regulates proliferation of osteoclast precursors, macrophage programming, phagocytosis and activation and is required for endotoxin tolerance. Involved in the control of cell-cell junctions, CD32a signaling in neutrophils and modulation of EGF-induced phospholipase C activity. Key regulator of neutrophil migration, by governing the formation of the leading edge and polarization required for chemotaxis. Modulates FCGR3/CD16-mediated cytotoxicity in NK cells. Mediates the activin/TGF-beta-induced apoptosis through its Smad-dependent expression. This chain is Phosphatidylinositol 3,4,5-trisphosphate 5-phosphatase 1 (Inpp5d), found in Mus musculus (Mouse).